We begin with the raw amino-acid sequence, 486 residues long: Glutamyl-tRNA(Gln) amidotransferase subunit A (486 aa).

Catalysis depends on charge relay system residues lysine 74 and serine 149. The Acyl-ester intermediate role is filled by serine 173.

Belongs to the amidase family. GatA subfamily. As to quaternary structure, heterotrimer of A, B and C subunits.

The enzyme catalyses L-glutamyl-tRNA(Gln) + L-glutamine + ATP + H2O = L-glutaminyl-tRNA(Gln) + L-glutamate + ADP + phosphate + H(+). In terms of biological role, allows the formation of correctly charged Gln-tRNA(Gln) through the transamidation of misacylated Glu-tRNA(Gln) in organisms which lack glutaminyl-tRNA synthetase. The reaction takes place in the presence of glutamine and ATP through an activated gamma-phospho-Glu-tRNA(Gln). This chain is Glutamyl-tRNA(Gln) amidotransferase subunit A, found in Prochlorococcus marinus (strain MIT 9303).